Consider the following 308-residue polypeptide: Methionyl-tRNA formyltransferase (308 aa).

111–114 (SLLP) lines the (6S)-5,6,7,8-tetrahydrofolate pocket.

It belongs to the Fmt family.

The catalysed reaction is L-methionyl-tRNA(fMet) + (6R)-10-formyltetrahydrofolate = N-formyl-L-methionyl-tRNA(fMet) + (6S)-5,6,7,8-tetrahydrofolate + H(+). Functionally, attaches a formyl group to the free amino group of methionyl-tRNA(fMet). The formyl group appears to play a dual role in the initiator identity of N-formylmethionyl-tRNA by promoting its recognition by IF2 and preventing the misappropriation of this tRNA by the elongation apparatus. In Thermodesulfovibrio yellowstonii (strain ATCC 51303 / DSM 11347 / YP87), this protein is Methionyl-tRNA formyltransferase.